Consider the following 582-residue polypeptide: Aspartate--tRNA ligase (582 aa).

Residue E174 participates in L-aspartate binding. Residues Q198–K201 form an aspartate region. R220 lines the L-aspartate pocket. Residues R220–E222 and Q229 contribute to the ATP site. Position 443 (H443) interacts with L-aspartate. E477 contributes to the ATP binding site. R484 provides a ligand contact to L-aspartate. Residue G529–R532 participates in ATP binding.

This sequence belongs to the class-II aminoacyl-tRNA synthetase family. Type 1 subfamily. As to quaternary structure, homodimer.

It localises to the cytoplasm. The enzyme catalyses tRNA(Asp) + L-aspartate + ATP = L-aspartyl-tRNA(Asp) + AMP + diphosphate. In terms of biological role, catalyzes the attachment of L-aspartate to tRNA(Asp) in a two-step reaction: L-aspartate is first activated by ATP to form Asp-AMP and then transferred to the acceptor end of tRNA(Asp). The chain is Aspartate--tRNA ligase from Streptococcus pyogenes serotype M28 (strain MGAS6180).